The sequence spans 182 residues: Putative adenylate kinase (182 aa).

Residues Gly10, Gly12, Lys13, Thr14, and Ser15 each contribute to the ATP site. The NMP stretch occupies residues 30–53 (HLNEMIKEEHLYTEVDEVRDAVIA). The tract at residues 104–114 (ARGYSEEKIRE) is LID. The ATP site is built by Arg105 and Lys143.

This sequence belongs to the adenylate kinase family. AK6 subfamily. In terms of assembly, interacts with uS11. Not a structural component of 40S pre-ribosomes, but transiently interacts with them by binding to uS11.

It catalyses the reaction AMP + ATP = 2 ADP. The catalysed reaction is ATP + H2O = ADP + phosphate + H(+). Functionally, broad-specificity nucleoside monophosphate (NMP) kinase that catalyzes the reversible transfer of the terminal phosphate group between nucleoside triphosphates and monophosphates. Also has ATPase activity. Involved in the late maturation steps of the 30S ribosomal particles, specifically 16S rRNA maturation. While NMP activity is not required for ribosome maturation, ATPase activity is. Associates transiently with small ribosomal subunit protein uS11. ATP hydrolysis breaks the interaction with uS11. May temporarily remove uS11 from the ribosome to enable a conformational change of the ribosomal RNA that is needed for the final maturation step of the small ribosomal subunit. The chain is Putative adenylate kinase from Methanosarcina barkeri (strain Fusaro / DSM 804).